A 176-amino-acid polypeptide reads, in one-letter code: dCTP deaminase (176 aa).

DCTP contacts are provided by residues 99–104 (RSTLAR) and Asp115. The active-site Proton donor/acceptor is the Glu125. Gln163 contacts dCTP.

This sequence belongs to the dCTP deaminase family. Homotrimer.

The enzyme catalyses dCTP + H2O + H(+) = dUTP + NH4(+). It functions in the pathway pyrimidine metabolism; dUMP biosynthesis; dUMP from dCTP (dUTP route): step 1/2. Functionally, catalyzes the deamination of dCTP to dUTP. The sequence is that of dCTP deaminase from Pyrobaculum calidifontis (strain DSM 21063 / JCM 11548 / VA1).